Consider the following 131-residue polypeptide: Spermatocyte protein spe-27 (131 aa).

An N-terminal signal peptide occupies residues 1 to 17; sequence MNKSLIFLLSFAYSCYS.

Functionally, required for spermiogenesis. The protein is Spermatocyte protein spe-27 (spe-27) of Caenorhabditis elegans.